Here is a 642-residue protein sequence, read N- to C-terminus: Extracellular metalloproteinase 5 (642 aa).

A signal peptide spans 1–19; that stretch reads MHGLLLAAGLLSLPLHVLA. Positions 20–246 are excised as a propeptide; sequence HPQPSTTTSL…VHNVVDYVAH (227 aa). Asparagine 287 carries an N-linked (GlcNAc...) asparagine glycan. Histidine 430 lines the Zn(2+) pocket. Glutamate 431 is a catalytic residue. Histidine 434 contacts Zn(2+). Asparagine 595 and asparagine 624 each carry an N-linked (GlcNAc...) asparagine glycan.

This sequence belongs to the peptidase M36 family. The cofactor is Zn(2+).

Its subcellular location is the secreted. Its function is as follows. Secreted metalloproteinase that allows assimilation of proteinaceous substrates and probably acts as a virulence factor. This is Extracellular metalloproteinase 5 (MEP5) from Arthroderma gypseum (strain ATCC MYA-4604 / CBS 118893) (Microsporum gypseum).